The following is a 3371-amino-acid chain: MSPCGRKMGEGRQQRRAPVGKLLLLPGRRDTPHGRSGSSGARTQRSLLWLLVHVWLWAASGSSAQLFNLTLSVDEGLPPDTLVGDIRAGLPAAQQQEGSGFFLSEDSDDSPLLDDFHVHPDTGIIRTARRLDRERRDHYSFVAATLLGAVVQVEIRVNDVNDHSPRFPLDSLQLDVSELSPPGTAFRLPVAHDPDAGLFSTQGYTLVQPSDLPKDPAGPFFQLRYRTPGPLPSPLLPGSSSPLEPLDLVLLRRLDREEAAAHRLQIEAWDGGRPRRTGLLSVELRVLDENDNPPVFEQDEYRAAVREDAQPGAEVCRVRATDRDLGPNGFVRYSVRARQVPGAGSGGGALGDAAYFAVEELSGVVRVWRPLDREAQAWHQLVVEARDGGAEPEVATVRVSIAVLDVNDNRPAIHVLFLTEGGVARVSEGARPGDYVARVSVSDADGDWEKEDEATGELGVGLGDGSISLSLEGGEGDFALLPGGPPGVFFLCVEGPLDRESRDLYELLLVATDAGSPPLSTEETLLLRVADLNDQPPLFSQQHYKASVSEAAAPGTVVMWVSASDADEAGSDHAWLRYTVVQLSAPCNLGSLQSKMVHTAECGPSFAIDSESGAISTIRTLDREVQEAVELKVVAQDLGEPPLSATCLVSITVDDVNDNEPIFWRQVYNATIAEHAPVGHCFLQVTASDADSGLYGFIEYSLYDGFLSYEAPQAFRIDPHDGQICVSQDIDRERDPATYDLLVEAKDGGGLSAQAFVRVDLEDVNDNHPVFNPSTYVTSISDETQPGTEIINVLATDQDSGIYGTVAYELIPGNVSSLFTIDSTTGIIYLTLPLSHLESTTLSLMVSAQDGGGLTAVINADVTIHIFQTTLAPAEFERPKYTFLVYEDVPEDSPIGTVKAREPLNSSEPIFYRISSGDLGGKFSIHPRLGTIRTRKPLDHETQPVVVLTVQAQLGSAPACSSTEVNITVMDVNDNHPAFLRTSDEIRISQTTPPGTALYLARAEDRDSGRNGLIRYSIASPQPGVFAIDRALGVLFLNGSLGAGEQRELTLTLRAEDQGVHPQAALLVLTVVIEKREHSPSWTFEHLVYQVEVSESLSPMTQMLQTQAHPLGPQRAASPLRYSLEPSVDSAMFGIRPYTGWIYLRRQFDYESTQTYNFRVFAWIPEDGFLQNVSTTVIVRVWDENDNSPTFLHDVLFLKVEESPVPQGVIGKITAIDMDSGKNGQLLYFLLSDGKFFKMNPNTGELINWVALDREHRGHHEMTVLVTDRGSPPRNATMAVYVSVTDINDNRPFFPQCLPGKELHVKVLEGQPVNMLVTTVFAKDPDEGNNAEVTYSVSSEDSSDHFKIDANNGEIRTTTILSYDYRPSYRMSVIATDQGVPPLQGQAVVNIQVIPLSKGRAIMSQNIRHLIIPENLKPTKIMSLIKSSDHLQQHYNGKLHFSIVADDKDGHFEIDSSTGDLFLSKELDYETTSHYLFRVITTDHSKNLSLSSTVFLSIDVEDQNDHSPSFQDELIVISVEENVPIGTLVYVFNAKDDDGSFLNSRIQYYIESHNPGTNPFLIHPSFGTLVTVSRLDRESIPTVILTVTASDQAVNVTDRRLRSLTAQIVILDVNDHNPTFISFPNAHVKEDVTVGSLVHHITAHDPDEGRNGKVTYSILSGNENMTFMLDESSGLLTTTCPLDYEMKTQHILTVLALDDGTPALSSSQTLTVTVLDVNDEAPVFKQHLYEASVKENQNPGEFVTRVEALDRDSGVNSKLQFEIMPGASFELFEINSDTGEVVTTTILDREIQEVFTLRVLVRDGGFPSLSSTTTILCTVEDENDHAPEFIVSSYDIEVLENQEPEVVYTVLASDMDAGNNRAVEYHIIDGNTDECFTINEMSGELSTTRALDREQISNFTLVILCSDLGDPPRSSVIHLQVRVLDANDHSPSFPTLYYQSSVREDAEVGTVVLVLSAVDKDEGLNGQTEYFLTDEASGAFTIDPMSGTLKTSNTLDREARSQHTFSAVARDCSIQGSRSTTVIIKVYVTDVNDNDPVLEQNPFDVFLSPESPTNQTTVIVRADDLDLGPNGTVVFSFAETQSMFSIDKYTGEIQFQQNPSSEYFPIWLQLKVTDQGIPARTTTGLLVIHMEGEDVKISFSHHLYKGLVTENCEAGTSIVTVKAFAPDSIQDSMKYSIFSGNEDGVLSLCSKSGQLTVKEPKFLDFEVRNEVQLIVLAESSGHRAYCKVAVLIQDENDNSPCFEQSIYQASVSESQLYNAHVIQVFATDLDSGLNGLIEYSILSGNQEEAFQIDALSGVITTKAILDYELTSSYSLIVQATDKGMPRLSNTTVIKVQVTDINDNAPAFLPSEAVEITEDSLPGVIVTHVSVHDVDLNSAFIFSFAKESNPGTKFAIDQNTGVVVLVKTLDFEEMTEYELLIQISDSVHYTEGALVVRVLDVNDNPPVFSQDFYQVTVPESIPVGYSVLTLSATDLESNENISYRILSSSKEFSIDPKNGTIFTISPVLLLDTISTTQFLVEASDGGNPDLRALTLVEIGIEDMNNYAPEFTVKSYNLSLSEDALVGSTLVTFSNIDHDWTRENTYVEYSIISGNSQNNFHVETKFFHSEYPYKQVGYLVLLHSLDREASASHELVILASDSGCPPLSSTAVISIQVLDVNDNPPNFSSLSYHTHVKESTPLGSHITVVSANDRDTGSHAEIIYNIISGNEKGHFYLEENTGVLYLIKPLDYEKMTKFTLTVQASDAEKKHFSFAVVFVSVLDDNDHAPQFMFSSFSCIVPENLPISSTICSINALDFDAGPYGELTYSIVSPCFLTHGMSYDHDLFLIDPLTGDIHAKQILDYENGNKYCLTVQAKDKGDATASLVVWVDIEGIDEFEPIFTQDQYFFTLPEKNKDRQLIGRVEASDADAGIDGVILYSLGTSSPFFSVNKTNGNIYLIRALPLIKSQLNKEDTLEMKIIAHSPKSDSKFASCTVFVNVSFSSEGTPLAVFASSFSISLVVSFLVFLILICILIVMILRHKQKDTINNYEEKKTSSLDADLRVTRDASVLKAFQKTDDCSNEVVPVDATPEWLSLISIMEKDIVNLYRHSNSSGHCSVEGETAEDKEIQRINEHPYRKCSDSALSDHESRVPDSGIPRDSDQLSCLSGETDVMVTAETAEASQTFGEGDQGEGCSTTCAQNNVLPQTVQKREAKESILADVRKESVFISGDQEVRCAALSTQTTSDHDGKDNYHWNYLLSWEPKFQPLASVFNDIAKLKDEHLHMPGIPKEKKSFVFPPPLITAVAQPGIKAVPPRMPAVNLGQVPPKHPRSPIPYHLGSLPEGMTPNFSPSLSLLTMQPPALSPLLREGELLGTHISGTCHELKAEDEVQI.

The disordered stretch occupies residues Met1 to Gly40. Over Met1–Ser46 the chain is Cytoplasmic. Residues Leu47–Phe67 form a helical membrane-spanning segment. 27 Cadherin domains span residues Gln65 to Phe167, Pro168 to Phe296, Glu297 to Ile413, Ala424 to Phe539, Ser540 to Phe663, Trp664 to Phe771, Asn772 to Tyr881, Glu877 to Phe979, Leu980 to Trp1082, Glu1085 to Phe1191, Leu1192 to Phe1294, Pro1299 to Asn1415, Ser1404 to Phe1510, Gln1511 to Phe1620, Phe1620 to Phe1724, Lys1725 to Phe1829, Ile1830 to Phe1933, Pro1934 to Leu2038, Glu2039 to Met2130, Ser2140 to Phe2242, Glu2243 to Phe2347, Phe2347 to Phe2447, Ser2448 to Phe2549, Thr2550 to Phe2665, Ser2666 to Phe2769, Met2770 to Phe2880, and Thr2881 to Ala2988. At Asn68 to Pro2986 the chain is on the extracellular side. Residues Asn669, Asn772, Asn814, Asn905, Asn966, Asn1038, Asn1172, and Asn1275 are each glycosylated (N-linked (GlcNAc...) asparagine). Asn1487, Asn1595, Asn1617, and Asn1664 each carry an N-linked (GlcNAc...) asparagine glycan. N-linked (GlcNAc...) asparagine glycosylation occurs at Asn1898. N-linked (GlcNAc...) asparagine glycans are attached at residues Asn2054, Asn2070, and Asn2098. Residue Asn2329 is glycosylated (N-linked (GlcNAc...) asparagine). Asn2479, Asn2497, Asn2555, and Asn2664 each carry an N-linked (GlcNAc...) asparagine glycan. Asn2929 and Asn2977 each carry an N-linked (GlcNAc...) asparagine glycan. A helical membrane pass occupies residues Leu2987–Leu3017. Residues Arg3018–Ile3371 are Cytoplasmic-facing. Residues Lys3117–Asp3140 show a composition bias toward basic and acidic residues. The segment at Lys3117–Gln3141 is disordered.

Cerebral cortex and testis.

It is found in the membrane. Functionally, calcium-dependent cell-adhesion protein. This is Protocadherin-23 (DCHS2) from Homo sapiens (Human).